Consider the following 262-residue polypeptide: Glucosamine-6-phosphate deaminase (262 aa).

The active-site Proton acceptor; for enolization step is the Asp63. The For ring-opening step role is filled by Asn129. The active-site Proton acceptor; for ring-opening step is His131. The active-site For ring-opening step is Glu136.

It belongs to the glucosamine/galactosamine-6-phosphate isomerase family. NagB subfamily.

The enzyme catalyses alpha-D-glucosamine 6-phosphate + H2O = beta-D-fructose 6-phosphate + NH4(+). It functions in the pathway amino-sugar metabolism; N-acetylneuraminate degradation; D-fructose 6-phosphate from N-acetylneuraminate: step 5/5. In terms of biological role, catalyzes the reversible isomerization-deamination of glucosamine 6-phosphate (GlcN6P) to form fructose 6-phosphate (Fru6P) and ammonium ion. The protein is Glucosamine-6-phosphate deaminase of Bacillus cereus (strain ZK / E33L).